Reading from the N-terminus, the 205-residue chain is Inactive ribonuclease-like protein 9 (205 aa).

An N-terminal signal peptide occupies residues 1–26 (MMRTLITIHPLPLLLLLQQLLQPVQF). Disulfide bonds link Cys98–Cys153, Cys116–Cys168, and Cys123–Cys130. N-linked (GlcNAc...) asparagine glycosylation is found at Asn131 and Asn143.

Belongs to the pancreatic ribonuclease family.

It is found in the secreted. In terms of biological role, does not exhibit any ribonuclease activity. The chain is Inactive ribonuclease-like protein 9 (RNASE9) from Gorilla gorilla gorilla (Western lowland gorilla).